Here is a 556-residue protein sequence, read N- to C-terminus: PPE family protein PPE2 (556 aa).

The PPE stretch occupies residues 8–164 (ASPPEVHSAL…ASYQAVSTAA (157 aa)). An SH3-like region spans residues 201-256 (QKIGYTDFYNNVIQPFINWLTNLPFLQAMFSGFDPWLPSLGNPLTFLSPANIAFAL). The leucine zipper motif stretch occupies residues 319–340 (LEQTLALLPAALPLLAAPLAPL). Disordered regions lie at residues 385 to 418 (TPTPAPAPAPTAVTAPTPPLGPPPPPVTAPPPVT) and 443 to 556 (GTGV…TRVE). Residues 400 to 417 (PTPPLGPPPPPVTAPPPV) are compositionally biased toward pro residues. Residues 456-471 (AEAPASAAAPEEQVQP) are compositionally biased toward low complexity. The span at 472-481 (QRRRRPKIKQ) shows a compositional bias: basic residues. A Nuclear localization signal motif is present at residues 473-481 (RRRRPKIKQ).

This sequence belongs to the mycobacterial PPE family.

It localises to the secreted. Its subcellular location is the host cytoplasm. It is found in the host nucleus. Functionally, inhibits nitric oxide (NO) production in activated macrophages. Acts by inhibiting expression of the host inducible nitric oxide synthase (iNOS). PPE2 is translocated into the host macrophage nucleus, where it interacts with a GATA-binding site overlapping with the TATA box of NOS2 (iNOS) promoter, and strongly inhibits NOS2 gene transcription. Reduction in NO production in turn facilitates intracellular survival of the bacilli inside the macrophage. In addition, disrupts the assembly of NADPH oxidase complex, which inhibits NADPH oxidase-mediated reactive oxygen species (ROS) generation in macrophages and favors M.tuberculosis survival. Acts by interacting with NCF2, the cytosolic subunit of NADPH oxidase, and preventing translocation of NCF2 and NCF1 to the membrane, which causes a reduction of the functional assembly of NADPH oxidase complex and a decrease in NADPH oxidase activity. This Mycobacterium tuberculosis (strain CDC 1551 / Oshkosh) protein is PPE family protein PPE2 (PPE2).